Reading from the N-terminus, the 324-residue chain is Porphobilinogen deaminase (324 aa).

Residue cysteine 246 is modified to S-(dipyrrolylmethanemethyl)cysteine. The segment at 261 to 279 is insert; that stretch reads GQAPEEGGRAAASQAPAAL.

It belongs to the HMBS family. In terms of assembly, monomer. Requires dipyrromethane as cofactor.

It catalyses the reaction 4 porphobilinogen + H2O = hydroxymethylbilane + 4 NH4(+). It participates in porphyrin-containing compound metabolism; protoporphyrin-IX biosynthesis; coproporphyrinogen-III from 5-aminolevulinate: step 2/4. Functionally, tetrapolymerization of the monopyrrole PBG into the hydroxymethylbilane pre-uroporphyrinogen in several discrete steps. The sequence is that of Porphobilinogen deaminase (hemC) from Paenibacillus macerans (Bacillus macerans).